Consider the following 295-residue polypeptide: Ubiquitin-conjugating enzyme E2-34 kDa (295 aa).

A UBC core domain is found at 7–169 (TASSLLLRQY…VKMEVERSKQ (163 aa)). Cys-95 acts as the Glycyl thioester intermediate in catalysis. Residues 185-295 (ISQSKLDEPE…EDVERVSKKI (111 aa)) form a disordered region. At Ser-186 the chain carries Phosphoserine. Residues 189-200 (KLDEPESNKDMA) show a composition bias toward basic and acidic residues. Composition is skewed to acidic residues over residues 207–226 (SDLD…DYDD) and 234–265 (EDDD…DSID). The span at 269–279 (VMDRKQPHKAE) shows a compositional bias: basic and acidic residues. Phosphoserine occurs at positions 282 and 292.

Belongs to the ubiquitin-conjugating enzyme family. Interacts with CDC53. Component of the E3 ubiquitin ligase complexes SCF with CDC53, SKP1/CBF3D, HRT1 and some F-box proteins like MET30 and CDC4.

The protein localises to the cytoplasm. It is found in the nucleus. It carries out the reaction S-ubiquitinyl-[E1 ubiquitin-activating enzyme]-L-cysteine + [E2 ubiquitin-conjugating enzyme]-L-cysteine = [E1 ubiquitin-activating enzyme]-L-cysteine + S-ubiquitinyl-[E2 ubiquitin-conjugating enzyme]-L-cysteine.. It participates in protein modification; protein ubiquitination. Catalyzes the covalent attachment of ubiquitin to other proteins. Capable, in vitro, to ubiquitinate histone H2A. In terms of biological role, mediates the initiation of DNA replication (transition of G1 to S phase in cell cycle). Essential component of the E3 ubiquitin ligase complex SCF (SKP1-CUL1-F-box protein), which mediates the ubiquitination and subsequent proteasomal degradation of target proteins. Involved in the regulation of methionine biosynthesis genes and in the degradation of CDC6 together with CDC4 and CDC53. This chain is Ubiquitin-conjugating enzyme E2-34 kDa (CDC34), found in Saccharomyces cerevisiae (strain ATCC 204508 / S288c) (Baker's yeast).